An 846-amino-acid chain; its full sequence is MASEFYIGVKIGATLLGSFGAALSGTRTTLNGLGRVADELRARHTRLGDAMARAVAHPMRNIAELRGQYDRLGRTIDQVQAKQAALATRLARGAALREQRQGLGADMLGTYATAAATAAPVIGAVRQAATFEAGLRDIAITGNLTRDEEFRIGETMRRAALATSQGHNSILEGVGTLVAAGMDAKEAGQKSNLLGRVATATNADMKDLAGMVYSFSETLGIKGDAALKEAFNRAAYGGKLGRFELKDMAKALPEMTAAFAAKGIKGQDALTQIIASLEVGREGAGSGDEAVTNLRNWLSHMNAKATIDAYKKAGVDYQKSMSNLVAGGYSSYEGSLQIAQKFIASRGDAFMKQWKAAGAKGDEEAQRKLMESFGLNEVFQDIQTINHLLAMRQGWDKYQQNKKDMGSAQALNTIDQDYVRRAELATVAWGRFQTQIADLGITVGRALLPSLTDLMNTVTPLIQRTAQFAAAHPGLIRGVVGFATAVIGMKVATLAAGWGLNFFVKSPLNMVSTALTTVGAKWTLFRALWAGGGSRLSTVFQIFGMGAGAAGKFAAVIGRAGSLFMGFGRGALVVGRALLPFGQGMLMTFIGPLRLLAQGGMLLARVLGGQLVNGLMLAGRAVLWLGRALMLNPIGIAITAIAVGAYLIYRYWTPIKQFFGGIWASIRTAFAGVLGWFGVGLPKTFTDFGSHLIDGLVNGIRNRFTAAKNTLIEFGSNVKAWFANTLGIKSPSRVFMGFGDNIAQGAAIGIGRSSAVAARAAAGMATQAAAAASLQRINAARGGSPAGASVAGSGITVHFSPTITVQGGSPDGVKDQVKQGLNLSLRDLERMLDDLLAKRERRAYRS.

The stretch at 59–82 (MRNIAELRGQYDRLGRTIDQVQAK) forms a coiled coil.

The protein belongs to the P2likevirus tape measure protein family.

Its function is as follows. Serves as a base for tail tube protein polymerization and acts as a template for tail length determination. The chain is Probable tape measure protein from Burkholderia phage BcepMu (isolate -/United States/Summer/2002) (Bacteriophage BcepMu).